Here is a 366-residue protein sequence, read N- to C-terminus: Chorismate synthase (366 aa).

R48 is an NADP(+) binding site. FMN contacts are provided by residues 125-127, 238-239, G278, 293-297, and R319; these read RSS, NA, and KPTSS.

This sequence belongs to the chorismate synthase family. Homotetramer. The cofactor is FMNH2.

It catalyses the reaction 5-O-(1-carboxyvinyl)-3-phosphoshikimate = chorismate + phosphate. Its pathway is metabolic intermediate biosynthesis; chorismate biosynthesis; chorismate from D-erythrose 4-phosphate and phosphoenolpyruvate: step 7/7. Its function is as follows. Catalyzes the anti-1,4-elimination of the C-3 phosphate and the C-6 proR hydrogen from 5-enolpyruvylshikimate-3-phosphate (EPSP) to yield chorismate, which is the branch point compound that serves as the starting substrate for the three terminal pathways of aromatic amino acid biosynthesis. This reaction introduces a second double bond into the aromatic ring system. This is Chorismate synthase from Hydrogenovibrio crunogenus (strain DSM 25203 / XCL-2) (Thiomicrospira crunogena).